Reading from the N-terminus, the 2035-residue chain is Envoplakin (2035 aa).

Over residues 1-27 the composition is skewed to low complexity; sequence MFKGLSKGSQGKGSPKGSPAKGSPKGS. Disordered stretches follow at residues 1–37 and 63–84; these read MFKGLSKGSQGKGSPKGSPAKGSPKGSPNKHNRAATQ and KLQQDRQNGEQNQALQHQQETG. The globular 1 stretch occupies residues 1-841; it reads MFKGLSKGSQ…LEPALAVSAP (841 aa). The 4 X 4 AA tandem repeats of K-G-S-P stretch occupies residues 12 to 28; sequence KGSPKGSPAKGSPKGSP. Over residues 71 to 84 the composition is skewed to polar residues; sequence GEQNQALQHQQETG. The Spectrin repeat unit spans residues 229–330; that stretch reads YTHLQGCTKQ…LCICQESQLQ (102 aa). Residues 400–419 are disordered; sequence QEVAPLPQRRNPSKQPLHVD. The SH3 domain maps to 413–470; it reads KQPLHVDSICDWDSGEVQLLRGERYTLKDNADPYTWLVQGPGGETKSAPAACLCIPAP. Residues 842 to 1664 adopt a coiled-coil conformation; sequence KRLRVISLQE…EKERTLRDLH (823 aa). The interval 842–1674 is central fibrous rod domain; that stretch reads KRLRVISLQE…TKVSREELNQ (833 aa). Residues 1186 to 1227 form a Plectin 1 repeat; that stretch reads KQKPKVQLQERVSEIFQVLPETEQEIRRLRAQLQETGSKKSG. Phosphoserine is present on Ser-1576. Residues 1607–1631 are compositionally biased toward basic and acidic residues; it reads KQQKARQLQEEGRLLSQKTESERQK. The segment at 1607-1637 is disordered; it reads KQQKARQLQEEGRLLSQKTESERQKAAQRSQ. Residues 1675 to 2035 form a globular 2 region; it reads ETQTRETNLS…SPTLPRSCVR (361 aa). The stretch at 1679–1714 is one Plectin 2 repeat; sequence RETNLSTKICILEPETGNDMSPYEAYKRGVIDRGQY. Ser-1800 is subject to Phosphoserine. Plectin repeat units lie at residues 1819 to 1856, 1857 to 1894, 1895 to 1932, 1933 to 1970, and 1971 to 2008; these read FGLTEDSFPIAGIYDTTTDNKCSIKAAVAKNMLDPITG, QKLLEAQAATGGIVDLLSRERYSVHKAVERGLIENTST, QRLLNAQKAFTGIEDPVTRKRLSVGEAIQKGWMPQESV, LPHLLVQHLTGGLIDPKRTGRIPVPQAVLCGMISEDLG, and QLLQDESGYEKDLTDPITKERLSYKEAMGRCRKDPLSG. Ser-2026 is subject to Phosphoserine.

The protein belongs to the plakin or cytolinker family. In terms of assembly, may form a homodimer or a heterodimer with PPL.

Its subcellular location is the cell junction. The protein localises to the desmosome. It is found in the cornified envelope. The protein resides in the cytoplasm. It localises to the cytoskeleton. Its function is as follows. Component of the cornified envelope of keratinocytes. May link the cornified envelope to desmosomes and intermediate filaments. The polypeptide is Envoplakin (Evpl) (Mus musculus (Mouse)).